A 310-amino-acid chain; its full sequence is MPRTDNDSWDLATSVGATATMVAAARAIATNADNPLIADRFAEPLVRAVGVDFFTRWVTGDLVVADVDDTESGWQLAQMPDAMAVRTRFFDAFFQDATRAGVRQAVILASGLDARAYRLDWPAGMTVFEIDQPEVIAFKTTTLAGLGAVPRADLRTVAVDLRQDWPKALTDAGFDAGSPTAWIAEGLFGYLPPEAQDRLLDNITALSAAGSRLACEAIPNRPQQDAEKARELMRKATARWREHGFELEFGDLGYEGDRADVALYLQDLGWQSVGTQMGQLLADNGAAPIPHNDDSVTMADTIYYSSVLTA.

Residues aspartate 131 and 160–161 each bind S-adenosyl-L-methionine; that span reads DL.

The protein belongs to the UPF0677 family.

Its function is as follows. Exhibits S-adenosyl-L-methionine-dependent methyltransferase activity. The chain is Putative S-adenosyl-L-methionine-dependent methyltransferase MMAR_3534 from Mycobacterium marinum (strain ATCC BAA-535 / M).